The chain runs to 158 residues: Fluoride-specific ion channel FluC 2 (158 aa).

4 consecutive transmembrane segments (helical) span residues 25 to 45 (AWHG…IGGT), 63 to 83 (WTTF…MVVI), 95 to 115 (PFFG…AVDI), and 126 to 146 (TALA…RLAA). Residues Gly-103 and Thr-106 each contribute to the Na(+) site.

Belongs to the fluoride channel Fluc/FEX (TC 1.A.43) family.

It localises to the cell membrane. The catalysed reaction is fluoride(in) = fluoride(out). With respect to regulation, na(+) is not transported, but it plays an essential structural role and its presence is essential for fluoride channel function. In terms of biological role, fluoride-specific ion channel. Important for reducing fluoride concentration in the cell, thus reducing its toxicity. The polypeptide is Fluoride-specific ion channel FluC 2 (Streptomyces avermitilis (strain ATCC 31267 / DSM 46492 / JCM 5070 / NBRC 14893 / NCIMB 12804 / NRRL 8165 / MA-4680)).